A 334-amino-acid polypeptide reads, in one-letter code: uncharacterized protein (334 aa).

Belongs to the ADP-ribosylglycohydrolase family.

This is an uncharacterized protein from Escherichia coli (strain K12).